We begin with the raw amino-acid sequence, 116 residues long: Nucleoid-associated protein MLBr02330 (116 aa).

A disordered region spans residues 96-116; sequence LTSAMRPTAPPPTPPTYMAGT.

The protein belongs to the YbaB/EbfC family. In terms of assembly, homodimer.

It is found in the cytoplasm. It localises to the nucleoid. Its function is as follows. Binds to DNA and alters its conformation. May be involved in regulation of gene expression, nucleoid organization and DNA protection. This Mycobacterium leprae (strain Br4923) protein is Nucleoid-associated protein MLBr02330.